The primary structure comprises 288 residues: AA9 family lytic polysaccharide monooxygenase A (288 aa).

The N-terminal stretch at 1 to 22 (MKSTSATKFSVLAAATFAAAHG) is a signal peptide. The Cu(2+) site is built by H21 and H104. Cystine bridges form between C74-C191 and C115-C119. N151 carries N-linked (GlcNAc...) asparagine glycosylation. H177 and Q186 together coordinate O2. Position 188 (Y188) interacts with Cu(2+). Positions 236–270 (PEPYKSGSGSSDNAAEAVSSAAAEEPAAAATSAAA) are disordered. Over residues 249 to 270 (AAEAVSSAAAEEPAAAATSAAA) the composition is skewed to low complexity.

It belongs to the polysaccharide monooxygenase AA9 family. Cu(2+) serves as cofactor.

Its subcellular location is the secreted. It carries out the reaction [(1-&gt;4)-beta-D-glucosyl]n+m + reduced acceptor + O2 = 4-dehydro-beta-D-glucosyl-[(1-&gt;4)-beta-D-glucosyl]n-1 + [(1-&gt;4)-beta-D-glucosyl]m + acceptor + H2O.. Its function is as follows. Lytic polysaccharide monooxygenase (LPMO) that depolymerizes crystalline and amorphous polysaccharides via the oxidation of scissile alpha- or beta-(1-4)-glycosidic bonds, yielding C1 and C4 oxidation products. Catalysis by LPMOs requires the reduction of the active-site copper from Cu(II) to Cu(I) by a reducing agent and H(2)O(2) or O(2) as a cosubstrate. Active on cellulose and on xyloglucan for deconstruction of plant biomass. This is AA9 family lytic polysaccharide monooxygenase A from Geotrichum candidum (Oospora lactis).